Consider the following 494-residue polypeptide: 4-trimethylaminobutyraldehyde dehydrogenase (494 aa).

Ser2 bears the N-acetylserine mark. Lys30 is subject to N6-acetyllysine; alternate. N6-succinyllysine; alternate is present on Lys30. The residue at position 59 (Lys59) is an N6-succinyllysine. Residues Lys180 and 232–236 (GSVPT) each bind NAD(+). The Proton acceptor role is filled by Glu254. Cys288 serves as the catalytic Nucleophile. Position 298 is an N6-acetyllysine (Lys298). Glu391 contributes to the NAD(+) binding site.

This sequence belongs to the aldehyde dehydrogenase family. Homotetramer. Detected in lever (at protein level).

It localises to the cytoplasm. It is found in the cytosol. It carries out the reaction 4-(trimethylamino)butanal + NAD(+) + H2O = 4-(trimethylamino)butanoate + NADH + 2 H(+). The catalysed reaction is an aldehyde + NAD(+) + H2O = a carboxylate + NADH + 2 H(+). It catalyses the reaction 4-aminobutanal + NAD(+) + H2O = 4-aminobutanoate + NADH + 2 H(+). The enzyme catalyses formaldehyde + NAD(+) + H2O = formate + NADH + 2 H(+). It carries out the reaction acetaldehyde + NAD(+) + H2O = acetate + NADH + 2 H(+). The catalysed reaction is imidazole-4-acetaldehyde + NAD(+) + H2O = imidazole-4-acetate + NADH + 2 H(+). It catalyses the reaction acrolein + NAD(+) + H2O = acrylate + NADH + 2 H(+). The enzyme catalyses (5-hydroxyindol-3-yl)acetaldehyde + NAD(+) + H2O = (5-hydroxyindol-3-yl)acetate + NADH + 2 H(+). It carries out the reaction 3,4-dihydroxyphenylacetaldehyde + NAD(+) + H2O = 3,4-dihydroxyphenylacetate + NADH + 2 H(+). The catalysed reaction is spermine monoaldehyde + NAD(+) + H2O = N-(2-carboxyethyl)spermidine + NADH + 2 H(+). It catalyses the reaction propanal + NAD(+) + H2O = propanoate + NADH + 2 H(+). The enzyme catalyses butanal + NAD(+) + H2O = butanoate + NADH + 2 H(+). It carries out the reaction pentanal + NAD(+) + H2O = pentanoate + NADH + 2 H(+). The catalysed reaction is hexanal + NAD(+) + H2O = hexanoate + NADH + 2 H(+). The protein operates within amine and polyamine biosynthesis; carnitine biosynthesis. Its function is as follows. Converts gamma-trimethylaminobutyraldehyde into gamma-butyrobetaine with high efficiency (in vitro). Can catalyze the irreversible oxidation of a broad range of aldehydes to the corresponding acids in an NAD-dependent reaction, but with low efficiency. Catalyzes the oxidation of aldehydes arising from biogenic amines and polyamines. This chain is 4-trimethylaminobutyraldehyde dehydrogenase (Aldh9a1), found in Rattus norvegicus (Rat).